Reading from the N-terminus, the 751-residue chain is Catalase-peroxidase (751 aa).

Positions 1 to 24 (MADKCPFHNQAPKPNVAGSGTQNR) are disordered. A cross-link (tryptophyl-tyrosyl-methioninium (Trp-Tyr) (with M-267)) is located at residues 95 to 241 (WHSAGTYRTF…LAAAHMGLIY (147 aa)). The active-site Proton acceptor is the His-96. Positions 241–267 (YVNPEGPDGNPDPVAAARDIRTTFARM) form a cross-link, tryptophyl-tyrosyl-methioninium (Tyr-Met) (with W-95). Residue His-282 coordinates heme b.

The protein belongs to the peroxidase family. Peroxidase/catalase subfamily. Homodimer or homotetramer. Heme b serves as cofactor. In terms of processing, formation of the three residue Trp-Tyr-Met cross-link is important for the catalase, but not the peroxidase activity of the enzyme.

The protein resides in the cytoplasm. It carries out the reaction H2O2 + AH2 = A + 2 H2O. It catalyses the reaction 2 H2O2 = O2 + 2 H2O. Its function is as follows. Bifunctional enzyme with both catalase and broad-spectrum peroxidase activity. This Aspergillus oryzae (strain ATCC 42149 / RIB 40) (Yellow koji mold) protein is Catalase-peroxidase.